The chain runs to 287 residues: MLYLVGLGLSDETDITVKGLEVVKKAERVYLEAYTSILLVDQATLESYYGRPIVVADREMVESNSDEILRDADKVDVAFCVVGDPFGATTHTDLVLRARELGIQVRTVPNASIMSGIGAAGLQLYNFGQTVSMVFFLDNWRPASFYDRIKENRSIGLHTLVLLDIKVKEQSLENMARGRKIYEPPRYMTVGTCAQQMLEIEEEKQEGVYGPESLAIGCARVGGKTEKFVSGTLKELCDADDLLGPPLHSLILLGRRTHELEHDFVREFAVNKENWDRIWKAEYCGKQ.

S-adenosyl-L-methionine-binding positions include leucine 9, aspartate 84, glycine 87, 112 to 113 (SI), leucine 163, valine 221, and histidine 248.

The protein belongs to the diphthine synthase family.

Its subcellular location is the cytoplasm. It catalyses the reaction 2-[(3S)-amino-3-carboxypropyl]-L-histidyl-[translation elongation factor 2] + 4 S-adenosyl-L-methionine = diphthine methyl ester-[translation elongation factor 2] + 4 S-adenosyl-L-homocysteine + 3 H(+). It participates in protein modification; peptidyl-diphthamide biosynthesis. S-adenosyl-L-methionine-dependent methyltransferase that catalyzes four methylations of the modified target histidine residue in translation elongation factor 2 (EF-2), to form an intermediate called diphthine methyl ester. The four successive methylation reactions represent the second step of diphthamide biosynthesis. In Neurospora crassa (strain ATCC 24698 / 74-OR23-1A / CBS 708.71 / DSM 1257 / FGSC 987), this protein is Diphthine methyl ester synthase (dph-5).